A 261-amino-acid chain; its full sequence is Lytic polysaccharide monooxygenase-like protein X325 (261 aa).

The N-terminal stretch at 1 to 17 is a signal peptide; that stretch reads MQLSALALATLLATANA. The Cu(2+) site is built by H18, H64, and D133. 2 disulfide bridges follow: C39–C139 and C108–C155. 2 N-linked (GlcNAc...) asparagine glycosylation sites follow: N157 and N183. Residues 174 to 210 are disordered; the sequence is LAENTQGSGNSSGHAHGSSGSGSASASKTDSKSSAAS. A compositionally biased stretch (low complexity) spans 180-210; that stretch reads GSGNSSGHAHGSSGSGSASASKTDSKSSAAS. The GPI-anchor amidated asparagine moiety is linked to residue N238. A propeptide spans 239–261 (removed in mature form); the sequence is SGSLAYVNGALAIGGVVAAALLI.

The protein belongs to the X325 family. Cu(2+) is required as a cofactor.

It localises to the cell membrane. Lytic polysaccharide monooxygenase-like protein that has diverged to biological functions other than polysaccharide degradation since it does not perform oxidative cleavage of polysaccharides. Acts as a cell surface-bound protein that functions in the copper-accumulation pathway. The polypeptide is Lytic polysaccharide monooxygenase-like protein X325 (Yarrowia lipolytica (strain CLIB 122 / E 150) (Yeast)).